The sequence spans 241 residues: GLIPR1-like protein 1 (241 aa).

An N-terminal signal peptide occupies residues 1 to 22 (MILRKKLSYLWTLGLCLVASKS). Residues 39–172 (LRLHNEARTN…PDSALLVCNY (134 aa)) form the SCP domain. Ser-220 carries GPI-anchor amidated serine lipidation. Residues 221–241 (GTRQLIACNPLYLISVLLTIF) constitute a propeptide, removed in mature form.

Belongs to the CRISP family. Part of a oolemmal binding multimeric complex (IZUMO1 complex) composed at least of IZUMO1 and GLIPR1L1; the complex assemblage is influenced by the maturation status of the male germ cell. Interacts with IZUMO1. N-glycosylated. N-glycosylation decreases during the transit in the caput. As to expression, highly expressed in testis, where it localizes to round and elongating spermatids and differentiated spermatozoa in the seminiferous tubules and epididymis (at protein level).

The protein localises to the cytoplasmic vesicle. Its subcellular location is the secretory vesicle. It localises to the acrosome. The protein resides in the cell membrane. It is found in the membrane raft. Required for optimal fertilization at the stage of sperm-oocyte fusion, plays a role in optimizing acrosome function, the translocation of IZUMO1 during the acrosome reaction and the fertilization process. Component of epididymosomes, one type of membranous microvesicules which mediate the transfer of lipids and proteins to spermatozoa plasma membrane during epididymal maturation. Also a component of the CD9-positive microvesicules found in the cauda region. This chain is GLIPR1-like protein 1, found in Bos taurus (Bovine).